A 161-amino-acid polypeptide reads, in one-letter code: Large ribosomal subunit protein uL10 (161 aa).

This sequence belongs to the universal ribosomal protein uL10 family. Part of the ribosomal stalk of the 50S ribosomal subunit. The N-terminus interacts with L11 and the large rRNA to form the base of the stalk. The C-terminus forms an elongated spine to which L12 dimers bind in a sequential fashion forming a multimeric L10(L12)X complex.

Its function is as follows. Forms part of the ribosomal stalk, playing a central role in the interaction of the ribosome with GTP-bound translation factors. The chain is Large ribosomal subunit protein uL10 from Malacoplasma penetrans (strain HF-2) (Mycoplasma penetrans).